Here is a 555-residue protein sequence, read N- to C-terminus: Potassium-transporting ATPase potassium-binding subunit (555 aa).

10 helical membrane-spanning segments follow: residues 2 to 22 (IWVAVVITMLLFILVAKPTGI), 60 to 80 (QYALSLVLLNGFMIVVVYFIF), 130 to 150 (IGITFLMFAAPATTLALVMAF), 173 to 193 (VFLPIAFVTALVFVALGVPQT), 246 to 266 (MSNILQMMLMMLLPTALPFTY), 278 to 298 (ILFVSLFMVFLLGFITITTSE), 374 to 394 (AGFVNIIMYAIIAVFISGLMV), 412 to 432 (LIAVTILFHPLLILGFSALAL), 483 to 503 (LVMFLGRYFSLVTMLAVAASL), and 525 to 545 (GIFIGTIVIVGALTFFPMLVL).

The protein belongs to the KdpA family. In terms of assembly, the system is composed of three essential subunits: KdpA, KdpB and KdpC.

It is found in the cell membrane. Part of the high-affinity ATP-driven potassium transport (or Kdp) system, which catalyzes the hydrolysis of ATP coupled with the electrogenic transport of potassium into the cytoplasm. This subunit binds the extracellular potassium ions and delivers the ions to the membrane domain of KdpB through an intramembrane tunnel. The sequence is that of Potassium-transporting ATPase potassium-binding subunit from Bacillus cereus (strain AH820).